A 354-amino-acid chain; its full sequence is Uroporphyrinogen decarboxylase (354 aa).

Substrate-binding positions include 27-31 (RQAGR), Asp-77, Tyr-153, Thr-208, and His-326.

This sequence belongs to the uroporphyrinogen decarboxylase family. In terms of assembly, homodimer.

It localises to the cytoplasm. The catalysed reaction is uroporphyrinogen III + 4 H(+) = coproporphyrinogen III + 4 CO2. It functions in the pathway porphyrin-containing compound metabolism; protoporphyrin-IX biosynthesis; coproporphyrinogen-III from 5-aminolevulinate: step 4/4. In terms of biological role, catalyzes the decarboxylation of four acetate groups of uroporphyrinogen-III to yield coproporphyrinogen-III. The protein is Uroporphyrinogen decarboxylase of Neisseria meningitidis serogroup C / serotype 2a (strain ATCC 700532 / DSM 15464 / FAM18).